We begin with the raw amino-acid sequence, 276 residues long: Malectin-A (276 aa).

Residues 1–26 (MLSIRTVLGPLATILLTVLGPFGAHG) form the signal peptide. Residues 27–253 (SGLADKVIWA…TPNPYASDNS (227 aa)) lie on the Lumenal side of the membrane. Tyrosine 67, tyrosine 89, tyrosine 116, phenylalanine 117, and aspartate 186 together coordinate a carbohydrate. The disordered stretch occupies residues 204 to 247 (PMLQPHPGLEKKEEEEEEEEEEGSTSKKQINKNRVQSGPRTPNP). Over residues 216-226 (EEEEEEEEEEG) the composition is skewed to acidic residues. A compositionally biased stretch (polar residues) spans 229 to 247 (SKKQINKNRVQSGPRTPNP). A glycan (N-linked (GlcNAc...) asparagine) is linked at asparagine 252. Residues 254–274 (SLMFPILVAFGVFIPTLFCLC) form a helical membrane-spanning segment. Topologically, residues 275–276 (RL) are cytoplasmic.

Belongs to the malectin family. Widely expressed throughout development including the anterior neuroectoderm and neural crest at stages 18 and 20, and the retina, hatching gland, otic vesicle, epibranchial placodes, pronephros and tail tip of later states. At stage 41, expressed in the liver, pancreas, branchial arches and proctodeum. Expressed broadly in adults in fat, intestine, gall bladder, eye, muscle, kidney, stomach, liver, heart, pancreas and lung.

The protein localises to the endoplasmic reticulum membrane. Its function is as follows. Carbohydrate-binding protein with a strong ligand preference for Glc2-N-glycan. May play a role in the early steps of protein N-glycosylation. Can bind di- or higher oligomers but not monomers of glucose, including maltose, maltotriose, maltotetraose, maltoheptaose, nigerose, kojibose, cellobiose and isomaltose, although based on their subcellular locations, these are unlikely to all be physiological ligands. This Xenopus laevis (African clawed frog) protein is Malectin-A.